We begin with the raw amino-acid sequence, 303 residues long: Glutamyl-Q tRNA(Asp) synthetase (303 aa).

L-glutamate-binding positions include 16–20 (RFAPS) and glutamate 52. Positions 19–29 (PSPSGPLHFGS) match the 'HIGH' region motif. Residues cysteine 108, cysteine 110, tyrosine 122, and cysteine 126 each contribute to the Zn(2+) site. L-glutamate is bound by residues tyrosine 177 and arginine 195. A 'KMSKS' region motif is present at residues 233–237 (KLSKQ). Lysine 236 lines the ATP pocket.

Belongs to the class-I aminoacyl-tRNA synthetase family. GluQ subfamily. Zn(2+) is required as a cofactor.

Its function is as follows. Catalyzes the tRNA-independent activation of glutamate in presence of ATP and the subsequent transfer of glutamate onto a tRNA(Asp). Glutamate is transferred on the 2-amino-5-(4,5-dihydroxy-2-cyclopenten-1-yl) moiety of the queuosine in the wobble position of the QUC anticodon. The protein is Glutamyl-Q tRNA(Asp) synthetase of Vibrio vulnificus (strain YJ016).